Consider the following 880-residue polypeptide: Alanine--tRNA ligase (880 aa).

Positions 558, 562, 663, and 667 each coordinate Zn(2+).

Belongs to the class-II aminoacyl-tRNA synthetase family. Zn(2+) serves as cofactor.

It localises to the cytoplasm. The enzyme catalyses tRNA(Ala) + L-alanine + ATP = L-alanyl-tRNA(Ala) + AMP + diphosphate. Catalyzes the attachment of alanine to tRNA(Ala) in a two-step reaction: alanine is first activated by ATP to form Ala-AMP and then transferred to the acceptor end of tRNA(Ala). Also edits incorrectly charged Ser-tRNA(Ala) and Gly-tRNA(Ala) via its editing domain. The chain is Alanine--tRNA ligase from Mycoplasmopsis agalactiae (strain NCTC 10123 / CIP 59.7 / PG2) (Mycoplasma agalactiae).